The primary structure comprises 233 residues: Large ribosomal subunit protein uL1 (233 aa).

The protein belongs to the universal ribosomal protein uL1 family. As to quaternary structure, part of the 50S ribosomal subunit.

Its function is as follows. Binds directly to 23S rRNA. The L1 stalk is quite mobile in the ribosome, and is involved in E site tRNA release. In terms of biological role, protein L1 is also a translational repressor protein, it controls the translation of the L11 operon by binding to its mRNA. The polypeptide is Large ribosomal subunit protein uL1 (Shewanella baltica (strain OS185)).